Here is a 319-residue protein sequence, read N- to C-terminus: tRNA-cytidine(32) 2-sulfurtransferase (319 aa).

Positions 43–48 (SGGKDS) match the PP-loop motif motif. Residues cysteine 118, cysteine 121, and cysteine 209 each coordinate [4Fe-4S] cluster.

It belongs to the TtcA family. As to quaternary structure, homodimer. It depends on Mg(2+) as a cofactor. Requires [4Fe-4S] cluster as cofactor.

It is found in the cytoplasm. The catalysed reaction is cytidine(32) in tRNA + S-sulfanyl-L-cysteinyl-[cysteine desulfurase] + AH2 + ATP = 2-thiocytidine(32) in tRNA + L-cysteinyl-[cysteine desulfurase] + A + AMP + diphosphate + H(+). It participates in tRNA modification. Catalyzes the ATP-dependent 2-thiolation of cytidine in position 32 of tRNA, to form 2-thiocytidine (s(2)C32). The sulfur atoms are provided by the cysteine/cysteine desulfurase (IscS) system. In Neisseria meningitidis serogroup A / serotype 4A (strain DSM 15465 / Z2491), this protein is tRNA-cytidine(32) 2-sulfurtransferase.